Consider the following 445-residue polypeptide: Tubulin beta-4 chain (445 aa).

The short motif at 1-4 is the MREI motif element; the sequence is MREI. Q11, E69, S138, G142, T143, G144, N204, and N226 together coordinate GTP. Residue E69 participates in Mg(2+) binding. The segment at 425–445 is disordered; that stretch reads YQDATAEEEGEFEEGEEEENA. The segment covering 429–445 has biased composition (acidic residues); sequence TAEEEGEFEEGEEEENA. E438 is subject to 5-glutamyl polyglutamate.

The protein belongs to the tubulin family. In terms of assembly, dimer of alpha and beta chains. A typical microtubule is a hollow water-filled tube with an outer diameter of 25 nm and an inner diameter of 15 nM. Alpha-beta heterodimers associate head-to-tail to form protofilaments running lengthwise along the microtubule wall with the beta-tubulin subunit facing the microtubule plus end conferring a structural polarity. Microtubules usually have 13 protofilaments but different protofilament numbers can be found in some organisms and specialized cells. Mg(2+) serves as cofactor. Some glutamate residues at the C-terminus are polyglycylated, resulting in polyglycine chains on the gamma-carboxyl group. Glycylation is mainly limited to tubulin incorporated into axonemes (cilia and flagella) whereas glutamylation is prevalent in neuronal cells, centrioles, axonemes, and the mitotic spindle. Both modifications can coexist on the same protein on adjacent residues, and lowering polyglycylation levels increases polyglutamylation, and reciprocally. The precise function of polyglycylation is still unclear. Post-translationally, some glutamate residues at the C-terminus are polyglutamylated, resulting in polyglutamate chains on the gamma-carboxyl group. Polyglutamylation plays a key role in microtubule severing by spastin (SPAST). SPAST preferentially recognizes and acts on microtubules decorated with short polyglutamate tails: severing activity by SPAST increases as the number of glutamates per tubulin rises from one to eight, but decreases beyond this glutamylation threshold. In terms of tissue distribution, preferential expression in germ cells.

The protein localises to the cytoplasm. The protein resides in the cytoskeleton. Its function is as follows. Tubulin is the major constituent of microtubules, a cylinder consisting of laterally associated linear protofilaments composed of alpha- and beta-tubulin heterodimers. Microtubules grow by the addition of GTP-tubulin dimers to the microtubule end, where a stabilizing cap forms. Below the cap, tubulin dimers are in GDP-bound state, owing to GTPase activity of alpha-tubulin. The sequence is that of Tubulin beta-4 chain (tubb4) from Xenopus laevis (African clawed frog).